We begin with the raw amino-acid sequence, 238 residues long: RNA pyrophosphohydrolase (238 aa).

The region spanning 6–149 (GFRPNVGIIL…KREVYQMALS (144 aa)) is the Nudix hydrolase domain. A Nudix box motif is present at residues 38 to 59 (GGIKYGETPEQAMYRELHEEVG). The interval 161-238 (APLSPYGRGG…PDDTPSKDSL (78 aa)) is disordered. The segment covering 171 to 181 (PHRERDGRDNR) has biased composition (basic and acidic residues). Positions 188-199 (RNDQNTRGQRQP) are enriched in polar residues. Residues 204–217 (VTTSTVIVETVITS) show a composition bias toward low complexity.

It belongs to the Nudix hydrolase family. RppH subfamily. A divalent metal cation is required as a cofactor.

Functionally, accelerates the degradation of transcripts by removing pyrophosphate from the 5'-end of triphosphorylated RNA, leading to a more labile monophosphorylated state that can stimulate subsequent ribonuclease cleavage. The polypeptide is RNA pyrophosphohydrolase (Ralstonia nicotianae (strain ATCC BAA-1114 / GMI1000) (Ralstonia solanacearum)).